Consider the following 1879-residue polypeptide: Genome polyprotein (1879 aa).

A disordered region spans residues G37–P98. Residues P38–V50 are compositionally biased toward basic and acidic residues. Positions S79–V93 are enriched in polar residues. The region spanning D564–K720 is the SF3 helicase domain. ATP is bound at residue G590–T597. Y1093 carries the O-(5'-phospho-RNA)-tyrosine modification. A Peptidase C24 domain is found at G1188 to D1341. Residues H1222, E1243, and C1305 each act as for 3CLpro activity in the active site. In terms of domain architecture, RdRp catalytic spans H1591 to M1716.

In terms of assembly, homodimer. Interacts with NTPase, protein p30 and protease-polymerase p76. Interacts with capsid protein VP1 and protease-polymerase p76. Interacts with host IEF4e; this interaction plays a role in translation of viral proteins. As to quaternary structure, homooligomer. Interacts with Vpg, protein p32 and may interact with capsid protein VP1. Post-translationally, specific enzymatic cleavages in vivo yield mature proteins. Pro-Pol is first autocatalytically cleaved, then processes the whole polyprotein. In terms of processing, VPg is uridylylated by the polymerase and is covalently attached to the 5'-end of the polyadenylated genomic and subgenomic RNAs. This uridylylated form acts as a nucleotide-peptide primer for the polymerase.

It localises to the host endoplasmic reticulum membrane. It carries out the reaction a ribonucleoside 5'-triphosphate + H2O = a ribonucleoside 5'-diphosphate + phosphate + H(+). The enzyme catalyses RNA(n) + a ribonucleoside 5'-triphosphate = RNA(n+1) + diphosphate. The catalysed reaction is Endopeptidase with a preference for cleavage when the P1 position is occupied by Glu-|-Xaa and the P1' position is occupied by Gly-|-Yaa.. Together with NTPase and NS4, initiates the formation of the replication complex. Induces the proliferation of the host smooth ER membranes forming long tubular structures. These remodeled membranes probably form the viral factories that contain the replication complex. Its function is as follows. Displays NTPase activity, but no helicase activity. Induces the formation of convoluted membranes derived from the host ER. These remodeled membranes probably form the viral factories that contain the replication complex. Together with NS2 and NS4, initiates the formation of the replication complex. In terms of biological role, probable key protein responsible for the formation of membrane alterations by the virus. Induces the formation of convoluted membranes derived from the host ER. These remodeled membranes probably form the viral factories that contain the replication complex. Together with NS2 and NTPase, initiates the formation of the replication complex. Functionally, viral genome-linked protein is covalently linked to the 5'-end of the positive-strand, negative-strand genomic RNAs and subgenomic RNA. Acts as a genome-linked replication primer. May recruit ribosome to viral RNA thereby promoting viral proteins translation. Interacts with host translation initiation complex to allow the translation of viral proteins. Protease-polymerase p76 processes the polyprotein: Pro-Pol is first released by autocleavage, then all other proteins are cleaved. Cleaves host translation initiation factor eIF4G1, eIF4G2 and PABP1 thereby inducing a shutdown of host protein synthesis. This shutdown may not prevent viral mRNA from being translated since viral Vpg replaces the cap. Also functions as an RNA-directed RNA polymerase, which replicates genomic and antigenomic viral RNA by recognizing specific signals. Also transcribes a subgenomic mRNA by initiating RNA synthesis internally on antigenomic RNA. This sgRNA codes for structural proteins. Catalyzes the covalent attachment VPg with viral RNAs. The protein is Genome polyprotein of Otariidae (fur seals &amp; sea lions).